The sequence spans 1394 residues: MAALLRSARWLLRAGAAPRLPLSLRLLPGGPGRLHAASYLPAARAGPVAGGLLSPARLYAIAAKEKDIQEESTFSSRKISNQFDWALMRLDLSVRRTGRIPKKLLQKVFNDTCRSGGLGGSHALLLLRSCGSLLPELKLEERTEFAHRIWDTLQKLGAVYDVSHYNALLKVYLQNEYKFSPTDFLAKMEEANIQPNRVTYQRLIASYCNVGDIEGASKILGFMKTKDLPVTEAVFSALVTGHARAGDMENAENILTVMRDAGIEPGPDTYLALLNAYAEKGDIDHVKQTLEKVEKSELHLMDRDLLQIIFSFSKAGYPQYVSEILEKVTCERRYIPDAMNLILLLVTEKLEDVALQILLACPVSKEDGPSVFGSFFLQHCVTMNTPVEKLTDYCKKLKEVQMHSFPLQFTLHCALLANKTDLAKALMKAVKEEGFPIRPHYFWPLLVGRRKEKNVQGIIEILKGMQELGVHPDQETYTDYVIPCFDSVNSARAILQENGCLSDSDMFSQAGLRSEAANGNLDFVLSFLKSNTLPISLQSIRSSLLLGFRRSMNINLWSEITELLYKDGRYCQEPRGPTEAVGYFLYNLIDSMSDSEVQAKEEHLRQYFHQLEKMNVKIPENIYRGIRNLLESYHVPELIKDAHLLVESKNLDFQKTVQLTSSELESTLETLKAENQPIRDVLKQLILVLCSEENMQKALELKAKYESDMVTGGYAALINLCCRHDKVEDALNLKEEFDRLDSSAVLDTGKYVGLVRVLAKHGKLQDAINILKEMKEKDVLIKDTTALSFFHMLNGAALRGEIETVKQLHEAIVTLGLAEPSTNISFPLVTVHLEKGDLSTALEVAIDCYEKYKVLPRIHDVLCKLVEKGETDLIQKAMDFVSQEQGEMVMLYDLFFAFLQTGNYKEAKKIIETPGIRARSARLQWFCDRCVANNQVETLEKLVELTQKLFECDRDQMYYNLLKLYKINGDWQRADAVWNKIQEENVIPREKTLRLLAEILREGNQEVPFDVPELWYEDEKHSLNSSSASTTEPDFQKDILIACRLNQKKGAYDIFLNAKEQNIVFNAETYSNLIKLLMSEDYFTQAMEVKAFAETHIKGFTLNDAANSRLIITQVRRDYLKEAVTTLKTVLDQQQTPSRLAVTRVIQALAMKGDVENIEVVQKMLNGLEDSIGLSKMVFINNIALAQIKNNNIDAAIENIENMLTSENKVIEPQYFGLAYLFRKVIEEQLEPAVEKISIMAERLANQFAIYKPVTDFFLQLVDAGKVDDARALLQRCGAIAEQTPILLLFLLRNSRKQGKASTVKSVLELIPELNEKEEAYNSLMKSYVSEKDVTSAKALYEHLTAKNTKLDDLFLKRYASLLKYAGEPVPFIEPPESFEFYAQQLRKLRENSS.

A mitochondrion-targeting transit peptide spans 1–59; the sequence is MAALLRSARWLLRAGAAPRLPLSLRLLPGGPGRLHAASYLPAARAGPVAGGLLSPARLY. PPR repeat units lie at residues 126–160, 161–195, 196–230, 231–265, 266–300, 301–335, 403–437, and 438–472; these read LLRSCGSLLPELKLEERTEFAHRIWDTLQKLGAVY, DVSHYNALLKVYLQNEYKFSPTDFLAKMEEANIQP, NRVTYQRLIASYCNVGDIEGASKILGFMKTKDLPV, TEAVFSALVTGHARAGDMENAENILTVMRDAGIEP, GPDTYLALLNAYAEKGDIDHVKQTLEKVEKSELHL, MDRDLLQIIFSFSKAGYPQYVSEILEKVTCERRYI, HSFPLQFTLHCALLANKTDLAKALMKAVKEEGFPI, and RPHYFWPLLVGRRKEKNVQGIIEILKGMQELGVHP. N6-acetyllysine occurs at positions 155, 187, and 226. Residue Lys292 is modified to N6-acetyllysine. N6-acetyllysine is present on residues Lys463 and Lys613. PPR repeat units follow at residues 678 to 709, 710 to 746, 747 to 784, 785 to 820, 821 to 856, and 954 to 988; these read IRDVLKQLILVLCSEENMQKALELKAKYESDM, VTGGYAALINLCCRHDKVEDALNLKEEFDRLDSSAVL, DTGKYVGLVRVLAKHGKLQDAINILKEMKEKDVLIKDT, TALSFFHMLNGAALRGEIETVKQLHEAIVTLGLAEP, STNISFPLVTVHLEKGDLSTALEVAIDCYEKYKVLP, and RDQMYYNLLKLYKINGDWQRADAVWNKIQEENVIP. An interaction with BECN1 and Aedes aegypti venom allergen-1 region spans residues 712–1067; sequence GGYAALINLC…AKEQNIVFNA (356 aa). Residues Lys726 and Lys750 each carry the N6-acetyllysine modification. Ser1026, Ser1027, and Ser1029 each carry phosphoserine. PPR repeat units follow at residues 1031–1065, 1066–1102, 1103–1137, 1138–1175, 1176–1210, and 1317–1351; these read TEPDFQKDILIACRLNQKKGAYDIFLNAKEQNIVF, NAETYSNLIKLLMSEDYFTQAMEVKAFAETHIKGFTL, NDAANSRLIITQVRRDYLKEAVTTLKTVLDQQQTP, SRLAVTRVIQALAMKGDVENIEVVQKMLNGLEDSIGLS, KMVFINNIALAQIKNNNIDAAIENIENMLTSENKV, and KEEAYNSLMKSYVSEKDVTSAKALYEHLTAKNTKL. Positions 1121 to 1394 are RNA-binding; that stretch reads KEAVTTLKTV…QLRKLRENSS (274 aa). A Phosphothreonine modification is found at Thr1136. A Phosphoserine modification is found at Ser1138.

As to quaternary structure, component of mRNP complexes associated with HNRPA1. Component of the complex, at least composed of LRPPRC, BECN1 and BCL2; the interactions prevent BECN1 from forming an autophagy-inducing complex with PIK3C3. Interacts with CECR2, HEBP2, MAP1S and UXT. Interacts with PPARGC1A. Interacts with FOXO1. Interacts (via N-terminus) with EIF4E; the interaction promotes association of EIF4E with 4ESE-containing mRNAs. Interacts with exportin XPO1/CRM1; interacts both alone and in complex with EIF4E and 4ESE-containing mRNAs to form an EIF4E-dependent mRNA export complex. Interacts with importin IPO8; the interaction occurs when LRPPRC is in its RNA-free form and returns LRPPRC to the nucleus for further export rounds. Interacts with BECN1. Interacts with Aedes aegypti venom allergen-1; the interaction interrupts BECN1 and LRPPRC association. Expressed ubiquitously. Expression is highest in heart, skeletal muscle, kidney and liver, intermediate in brain, non-mucosal colon, spleen and placenta, and lowest in small intestine, thymus, lung and peripheral blood leukocytes.

The protein resides in the mitochondrion. The protein localises to the nucleus. Its subcellular location is the nucleoplasm. It localises to the nucleus inner membrane. It is found in the nucleus outer membrane. In terms of biological role, may play a role in RNA metabolism in both nuclei and mitochondria. In the nucleus binds to HNRPA1-associated poly(A) mRNAs and is part of nmRNP complexes at late stages of mRNA maturation which are possibly associated with nuclear mRNA export. Positively modulates nuclear export of mRNAs containing the EIF4E sensitivity element (4ESE) by binding simultaneously to both EIF4E and the 4ESE and acting as a platform for assembly for the RNA export complex. Also binds to exportin XPO1/CRM1 to engage the nuclear pore and traffic the bound mRNAs to the cytoplasm. May bind mature mRNA in the nucleus outer membrane. In mitochondria binds to poly(A) mRNA. Plays a role in translation or stability of mitochondrially encoded cytochrome c oxidase (COX) subunits. May be involved in transcription regulation. Cooperates with PPARGC1A to regulate certain mitochondrially encoded genes and gluconeogenic genes and may regulate docking of PPARGC1A to transcription factors. Seems to be involved in the transcription regulation of the multidrug-related genes MDR1 and MVP. Part of a nuclear factor that binds to the invMED1 element of MDR1 and MVP gene promoters. Binds single-stranded DNA. Required for maintaining mitochondrial potential. Suppresses the initiation of basal levels of autophagy and mitophagy by sustaining BCL2 levels. This Homo sapiens (Human) protein is Leucine-rich PPR motif-containing protein, mitochondrial (LRPPRC).